Consider the following 259-residue polypeptide: uncharacterized protein (259 aa).

Residues 51 to 173 (GKTHAKIVAN…IAVADGTDMT (123 aa)) form the HD domain.

This is an uncharacterized protein from Methanocaldococcus jannaschii (strain ATCC 43067 / DSM 2661 / JAL-1 / JCM 10045 / NBRC 100440) (Methanococcus jannaschii).